We begin with the raw amino-acid sequence, 424 residues long: Calreticulin (424 aa).

An N-terminal signal peptide occupies residues 1-19 (MRLLLCLIFLVFVFNFALS). Cysteine 105 and cysteine 137 are oxidised to a cystine. Residues tyrosine 109, lysine 111, tyrosine 128, and aspartate 135 each contribute to the an alpha-D-glucoside site. Repeat copies occupy residues 191–202 (IQAGNLADDWEL), 210–221 (DPKQSKPVDWVD), 227–238 (DPEDVKPAGHDD), 246–256 (PEAVKPEDWNE), 260–270 (GEWEAPTIANP), 274–284 (GEWKAKKIPNP), and 288–298 (GEWVHPLIDNP). Positions 191–256 (IQAGNLADDW…EAVKPEDWNE (66 aa)) are 4 X 12 AA approximate repeats. Residues 260 to 298 (GEWEAPTIANPEYKGEWKAKKIPNPEYKGEWVHPLIDNP) form a 3 X 11 AA approximate repeats region. Glutamate 318 provides a ligand contact to an alpha-D-glucoside. Residues 370–385 (RKKADEKLAAEKAAEK) are compositionally biased toward basic and acidic residues. Residues 370–424 (RKKADEKLAAEKAAEKEAEEADEEEEEVAEEDLVKTDDKKEEVKKSTKKVDHDEL) are disordered. Positions 386 to 400 (EAEEADEEEEEVAEE) are enriched in acidic residues. The span at 401-424 (DLVKTDDKKEEVKKSTKKVDHDEL) shows a compositional bias: basic and acidic residues. The Prevents secretion from ER signature appears at 421-424 (HDEL).

It belongs to the calreticulin family.

The protein resides in the endoplasmic reticulum lumen. Its function is as follows. Molecular calcium-binding chaperone promoting folding, oligomeric assembly and quality control in the ER via the calreticulin/calnexin cycle. This lectin may interact transiently with almost all of the monoglucosylated glycoproteins that are synthesized in the ER. This chain is Calreticulin (crtA), found in Dictyostelium discoideum (Social amoeba).